The following is a 2381-amino-acid chain: Nipped-B-like protein A (2381 aa).

An HEAT 1 repeat occupies 85 to 124 (SDELEGDVPVLLQLLMSRNPNIFRNKTAPNTPQYPAQAGI). 3 disordered regions span residues 131–211 (PPYK…HLQQ), 240–289 (HLLQ…DIVG), and 329–503 (LAAI…ELPP). A compositionally biased stretch (polar residues) spans 138 to 158 (GSMQGSPASANYQQASMSHSP). Composition is skewed to basic and acidic residues over residues 254–273 (GTKD…KSSE) and 333–355 (ERME…DKDK). Positions 373–389 (GTAGSGSGAPGGGGGAN) are enriched in gly residues. Basic and acidic residues predominate over residues 451 to 473 (VKHEHDHDPEHPHYDDKQPDTPR). The PxVxL motif signature appears at 552–565 (KKSVKPVVVLQKLS). Basic and acidic residues predominate over residues 570–580 (QRLMRERDSRA). Disordered stretches follow at residues 570 to 604 (QRLM…SVLK) and 629 to 708 (RKRS…NEVA). Over residues 581–592 (SKSGKNRLSSGR) the composition is skewed to polar residues. Composition is skewed to basic and acidic residues over residues 633–642 (TVNERPKYAE) and 658–694 (KDRD…RYDD). HEAT repeat units lie at residues 1299 to 1337 (SQSF…VDPS), 1375 to 1413 (PQLT…EQPN), 1477 to 1516 (YDWF…HILK), and 1843 to 1881 (LIHP…KYTG). Disordered stretches follow at residues 2005–2095 (IPGR…DLDD) and 2228–2271 (LLGG…GDSA). Basic residues predominate over residues 2006 to 2021 (PGRKSRKRRRRRRRPQ). Positions 2040-2056 (EEERGAQDEERERHSGD) are enriched in basic and acidic residues. A compositionally biased stretch (acidic residues) spans 2057-2068 (EEYDDDDYEEDE). Positions 2077-2086 (KPTEDIRQSE) are enriched in basic and acidic residues.

It belongs to the SCC2/Nipped-B family.

It localises to the nucleus. Its function is as follows. May play a structural role in chromatin. Involved in sister chromatid cohesion, possibly by facilitating the cohesin complex loading. Transcription factor, which may promote cortical neuron migration during brain development by regulating the transcription of crucial genes in this process. The polypeptide is Nipped-B-like protein A (nipbla) (Danio rerio (Zebrafish)).